Here is a 133-residue protein sequence, read N- to C-terminus: Holo-[acyl-carrier-protein] synthase (133 aa).

Positions 8 and 56 each coordinate Mg(2+).

The protein belongs to the P-Pant transferase superfamily. AcpS family. It depends on Mg(2+) as a cofactor.

Its subcellular location is the cytoplasm. The catalysed reaction is apo-[ACP] + CoA = holo-[ACP] + adenosine 3',5'-bisphosphate + H(+). In terms of biological role, transfers the 4'-phosphopantetheine moiety from coenzyme A to a Ser of acyl-carrier-protein. The sequence is that of Holo-[acyl-carrier-protein] synthase from Deinococcus radiodurans (strain ATCC 13939 / DSM 20539 / JCM 16871 / CCUG 27074 / LMG 4051 / NBRC 15346 / NCIMB 9279 / VKM B-1422 / R1).